We begin with the raw amino-acid sequence, 505 residues long: Glycerol kinase (505 aa).

Thr-14 serves as a coordination point for ADP. The ATP site is built by Thr-14, Thr-15, and Ser-16. Thr-14 lines the sn-glycerol 3-phosphate pocket. Arg-18 contributes to the ADP binding site. Sn-glycerol 3-phosphate-binding residues include Arg-84, Glu-85, Tyr-136, and Asp-246. Positions 84, 85, 136, 246, and 247 each coordinate glycerol. Residues Thr-268 and Gly-311 each contribute to the ADP site. Thr-268, Gly-311, Gln-315, and Gly-412 together coordinate ATP. ADP is bound by residues Gly-412 and Asn-416.

It belongs to the FGGY kinase family.

The enzyme catalyses glycerol + ATP = sn-glycerol 3-phosphate + ADP + H(+). Its pathway is polyol metabolism; glycerol degradation via glycerol kinase pathway; sn-glycerol 3-phosphate from glycerol: step 1/1. Inhibited by fructose 1,6-bisphosphate (FBP). Functionally, key enzyme in the regulation of glycerol uptake and metabolism. Catalyzes the phosphorylation of glycerol to yield sn-glycerol 3-phosphate. The chain is Glycerol kinase from Vibrio campbellii (strain ATCC BAA-1116).